Consider the following 532-residue polypeptide: Phosphoenolpyruvate carboxykinase (ATP) (532 aa).

Substrate is bound by residues R60, Y194, and K200. Residues K200, H219, and 237–245 contribute to the ATP site; that span reads GLSGTGKTT. K200 and H219 together coordinate Mn(2+). D258 contacts Mn(2+). The ATP site is built by E286, R324, and T449. R324 provides a ligand contact to substrate.

This sequence belongs to the phosphoenolpyruvate carboxykinase (ATP) family. Requires Mn(2+) as cofactor.

The protein localises to the cytoplasm. It catalyses the reaction oxaloacetate + ATP = phosphoenolpyruvate + ADP + CO2. Its pathway is carbohydrate biosynthesis; gluconeogenesis. Functionally, involved in the gluconeogenesis. Catalyzes the conversion of oxaloacetate (OAA) to phosphoenolpyruvate (PEP) through direct phosphoryl transfer between the nucleoside triphosphate and OAA. This chain is Phosphoenolpyruvate carboxykinase (ATP), found in Ruegeria pomeroyi (strain ATCC 700808 / DSM 15171 / DSS-3) (Silicibacter pomeroyi).